A 314-amino-acid polypeptide reads, in one-letter code: Lipoyl synthase (314 aa).

Positions 1–24 (MMDTPIIRHPEKVRRPDNPSPRKP) are disordered. 7 residues coordinate [4Fe-4S] cluster: cysteine 53, cysteine 58, cysteine 64, cysteine 79, cysteine 83, cysteine 86, and serine 293. The Radical SAM core domain occupies 65–282 (WKRRHATFMI…ADIARGKGFL (218 aa)). Residues 294–308 (HHADRDFEDLRKARQ) show a composition bias toward basic and acidic residues. A disordered region spans residues 294–314 (HHADRDFEDLRKARQDAAATK).

Belongs to the radical SAM superfamily. Lipoyl synthase family. The cofactor is [4Fe-4S] cluster.

It is found in the cytoplasm. It carries out the reaction [[Fe-S] cluster scaffold protein carrying a second [4Fe-4S](2+) cluster] + N(6)-octanoyl-L-lysyl-[protein] + 2 oxidized [2Fe-2S]-[ferredoxin] + 2 S-adenosyl-L-methionine + 4 H(+) = [[Fe-S] cluster scaffold protein] + N(6)-[(R)-dihydrolipoyl]-L-lysyl-[protein] + 4 Fe(3+) + 2 hydrogen sulfide + 2 5'-deoxyadenosine + 2 L-methionine + 2 reduced [2Fe-2S]-[ferredoxin]. The protein operates within protein modification; protein lipoylation via endogenous pathway; protein N(6)-(lipoyl)lysine from octanoyl-[acyl-carrier-protein]: step 2/2. Its function is as follows. Catalyzes the radical-mediated insertion of two sulfur atoms into the C-6 and C-8 positions of the octanoyl moiety bound to the lipoyl domains of lipoate-dependent enzymes, thereby converting the octanoylated domains into lipoylated derivatives. The sequence is that of Lipoyl synthase from Rhodospirillum rubrum (strain ATCC 11170 / ATH 1.1.1 / DSM 467 / LMG 4362 / NCIMB 8255 / S1).